Reading from the N-terminus, the 453-residue chain is Frizzled/smoothened-like sans CRD protein G (453 aa).

The N-terminal stretch at 1 to 24 (MIYILKNFIIILFFLLIILKRIES) is a signal peptide. The Extracellular segment spans residues 25 to 89 (QSLPSLPSPT…PFFTLDEWNK (65 aa)). Residues Asn-49 and Asn-67 are each glycosylated (N-linked (GlcNAc...) asparagine). Residues 90–110 (FLYMSLVMGTISFLCGLFLLI) traverse the membrane as a helical segment. Topologically, residues 111-124 (TYSPIVNKTHNRHT) are cytoplasmic. The chain crosses the membrane as a helical span at residues 125-145 (IGVMCMSFGVCLAMCSDMWNF). The Extracellular segment spans residues 146-170 (GSNFTDQKSICPSPGQYLTTSNSRC). Residue Asn-148 is glycosylated (N-linked (GlcNAc...) asparagine). Residues 171-191 (LGSGIVLQFGGVFGFLNWTLL) traverse the membrane as a helical segment. Residues 192-209 (SFDLFMNIKGIITKNYDK) lie on the Cytoplasmic side of the membrane. Residues 210 to 230 (YYFVATFIIAIIFTFVPIVND) form a helical membrane-spanning segment. At 231-250 (QYSMSYIGLGCWLGSAVYQL) the chain is on the extracellular side. Residues 251 to 271 (IFFWILLSICLIVSSVFIILI) traverse the membrane as a helical segment. Residues 272–296 (LKEIYIIIKQSKQKTSLKGNIRPLL) are Cytoplasmic-facing. Residues 297 to 317 (CITVTSFAFFYMFFYYISIVI) form a helical membrane-spanning segment. Residues 318 to 352 (EGDYYERILNEYTDCLMDPTKDVSECKFPRMSVAN) lie on the Extracellular side of the membrane. The helical transmembrane segment at 353–373 (EFVFLLCLRLLGIGAFIFYGI) threads the bilayer. Over 374–453 (NKEVKKIWLN…DDNFKPIIIK (80 aa)) the chain is Cytoplasmic.

This sequence belongs to the G-protein coupled receptor Fz/Smo family.

Its subcellular location is the membrane. The protein is Frizzled/smoothened-like sans CRD protein G (fscG) of Dictyostelium discoideum (Social amoeba).